Reading from the N-terminus, the 456-residue chain is Glutamate--tRNA ligase 1 (456 aa).

Residues 9–19 (PSPTGQIHIGN) carry the 'HIGH' region motif. A 'KMSKS' region motif is present at residues 250-254 (GLSKR). Residue lysine 253 coordinates ATP.

This sequence belongs to the class-I aminoacyl-tRNA synthetase family. Glutamate--tRNA ligase type 1 subfamily. In terms of assembly, monomer.

Its subcellular location is the cytoplasm. It catalyses the reaction tRNA(Glu) + L-glutamate + ATP = L-glutamyl-tRNA(Glu) + AMP + diphosphate. In terms of biological role, catalyzes the attachment of glutamate to tRNA(Glu) in a two-step reaction: glutamate is first activated by ATP to form Glu-AMP and then transferred to the acceptor end of tRNA(Glu). This is Glutamate--tRNA ligase 1 from Chelativorans sp. (strain BNC1).